The sequence spans 207 residues: Prolactin (207 aa).

The first 20 residues, 1–20, serve as a signal peptide directing secretion; the sequence is KSRLYFAVTVLMCAFVSING. 2 disulfides stabilise this stretch: cysteine 66–cysteine 180 and cysteine 197–cysteine 207.

Belongs to the somatotropin/prolactin family. As to expression, pituitary gland.

The protein localises to the secreted. The sequence is that of Prolactin (prl) from Hypophthalmichthys molitrix (Silver carp).